Here is a 236-residue protein sequence, read N- to C-terminus: Small ribosomal subunit protein uS2c (236 aa).

The protein belongs to the universal ribosomal protein uS2 family.

The protein resides in the plastid. The protein localises to the chloroplast. The protein is Small ribosomal subunit protein uS2c (rps2) of Agrostis stolonifera (Creeping bentgrass).